The following is a 2850-amino-acid chain: Hornerin (2850 aa).

An S-100-like region spans residues 1-81 (MPKLLQGVIT…TEYLLMIFKL (81 aa)). 2 consecutive EF-hand domains span residues 13–48 (DVFY…LKNP) and 49–84 (NDPD…LVQA). Ca(2+)-binding residues include Thr27, Glu32, Asp62, Asp64, Asn66, Lys68, and Glu73. 13 repeat units span residues 97-187 (SGSK…SDSH), 188-278 (QSSG…SSSG), 279-369 (SSSS…SGSG), 370-460 (HSSS…SGSG), 474-566 (HSSG…YGSG), 593-683 (QSSG…SGSG), 685-747 (SSSN…SSSG), 748-836 (LSSS…SASG), 839-875 (SSQG…SASH), 876-965 (HASG…SRSG), 966-1004 (QSSR…SGSG), 1007-1097 (PSPS…ASSG), and 1098-1188 (QSSS…SGSG). Basic and acidic residues predominate over residues 100-110 (KLRDDTHQHQE). Disordered stretches follow at residues 100 to 154 (KLRD…GTES) and 166 to 2817 (SGQH…KGGS). Residues 125–144 (SSFSHSSWSAGENDSYSRNV) are compositionally biased toward polar residues. Composition is skewed to low complexity over residues 167-192 (GQHN…SSGR) and 226-248 (GQSS…SQHG). Positions 249-259 (SGSGHSSGYGQ) are enriched in gly residues. Composition is skewed to low complexity over residues 276–308 (SSGS…QSPS) and 317–421 (GHSS…SGSG). Positions 422-433 (QSPGHGQRGSGS) are enriched in gly residues. 2 stretches are compositionally biased toward low complexity: residues 449 to 465 (SSSS…SSGF) and 473 to 482 (EHSSGYTQHG). The segment covering 483–493 (SGSGHSSGHGQ) has biased composition (gly residues). Composition is skewed to low complexity over residues 494 to 529 (HGSR…QSLG), 555 to 661 (SSSY…QSPS), 670 to 724 (GHSS…SHSS), 732 to 765 (RSGQ…SSGH), 782 to 806 (GSSS…SCGH), and 818 to 871 (GQHE…GQHE). 2 positions are modified to phosphoserine: Ser659 and Ser661. The segment covering 884-900 (GSGSGQSPGHGQRGSGS) has biased composition (gly residues). Ser890 carries the phosphoserine modification. 2 stretches are compositionally biased toward low complexity: residues 901 to 921 (GQSP…SSGR) and 931 to 996 (GFGH…SLGH). Phosphoserine occurs at positions 993 and 1008. 2 stretches are compositionally biased toward low complexity: residues 1019-1050 (GQSS…SSGL) and 1057-1115 (SGQS…SSGY). Over residues 1116–1132 (GRQGSGSGQSPGHGQRG) the composition is skewed to gly residues. Composition is skewed to low complexity over residues 1133-1156 (SGSR…SSGQ) and 1166-1184 (GFGH…SQHG). The span at 1185–1195 (SGSGHSSGYGQ) shows a compositional bias: gly residues. The residue at position 1205 (Arg1205) is an Omega-N-methylarginine. 2 stretches are compositionally biased toward low complexity: residues 1211 to 1232 (SSSG…SSGH) and 1253 to 1276 (GHSS…PYES). Residues 1215–1305 (SSSHYGQHGS…AYSQHGSGSG (91 aa)) form repeat 14. Residues 1280–1301 (HSSVFGQHESGSGHSSAYSQHG) show a composition bias toward polar residues. Composition is skewed to low complexity over residues 1309 to 1322 (SQGQ…QSST), 1331 to 1349 (GQSS…SSGY), 1370 to 1390 (GHSS…SSGR), 1400 to 1438 (GFGH…GQSS), and 1445 to 1466 (SSSG…SLGH). A run of 16 repeats spans residues 1332 to 1422 (QSSS…SGSG), 1423 to 1474 (HSSS…SGSG), 1477 to 1567 (PSPS…ASSG), 1568 to 1658 (QSSS…SGSG), 1685 to 1775 (SSSR…SGSG), 1802 to 1892 (QSSS…SGSG), 1893 to 1944 (HSSS…SGSG), 1947 to 2037 (PSPS…ASSG), 2038 to 2128 (QSSS…SGSG), 2155 to 2245 (SSSR…SGSG), 2272 to 2362 (QSSS…SGSG), 2363 to 2414 (HSSS…SGSG), 2417 to 2507 (PSPS…ASSG), 2508 to 2598 (QSSS…SGSG), 2625 to 2715 (SSSH…SGSG), and 2716 to 2806 (HFCS…SGSG). Phosphoserine is present on residues Ser1463 and Ser1478. Composition is skewed to low complexity over residues 1489–1520 (GQSS…SSGL) and 1527–1585 (SGQS…SSGY). The segment covering 1586-1602 (GRQGSGSGQSPGHGQRG) has biased composition (gly residues). Low complexity-rich tracts occupy residues 1603–1626 (SGSR…SSGQ) and 1636–1654 (GFGH…SQHG). Positions 1655-1665 (SGSGHSSGYGQ) are enriched in gly residues. The span at 1682-1702 (SSRSSSRYGQHGSGSRQSSGH) shows a compositional bias: low complexity. A phosphoserine mark is found at Ser1712 and Ser1714. A compositionally biased stretch (low complexity) spans 1723–1746 (GHSSSHGQHGSGSGRSSSRGPYES). Residues 1750–1771 (HSSVFGQHESGSGHSSAYSQHG) show a composition bias toward polar residues. Low complexity-rich tracts occupy residues 1779–1831 (SQGQ…QSPS), 1840–1860 (GHSS…SSGR), and 1870–1936 (GFGH…SLGH). Phosphoserine occurs at positions 1829 and 1831. Ser1933 and Ser1948 each carry phosphoserine. Low complexity-rich tracts occupy residues 1959–1990 (GQSS…SSGL) and 1997–2055 (SGQS…SSGY). The span at 2056 to 2072 (GRQGSGSGQSPGHGQRG) shows a compositional bias: gly residues. Composition is skewed to low complexity over residues 2073 to 2096 (SGSR…SSGQ) and 2106 to 2124 (GFGH…SQHG). Over residues 2125 to 2135 (SGSGHSSGYGQ) the composition is skewed to gly residues. 2 stretches are compositionally biased toward low complexity: residues 2151–2172 (SSSG…SSGH) and 2193–2216 (GHSS…PYES). Residues 2220–2241 (HSSVFGQHESGSGHSSAYSQHG) show a composition bias toward polar residues. Low complexity-rich tracts occupy residues 2249–2301 (SQGQ…QSPS), 2310–2330 (GHSS…SSGR), 2340–2378 (GFGH…GQSS), and 2385–2406 (SSSG…SLGH). Phosphoserine occurs at positions 2299 and 2301. 2 positions are modified to phosphoserine: Ser2403 and Ser2418. Low complexity-rich tracts occupy residues 2429 to 2460 (GQSS…SSGL) and 2467 to 2525 (SGQS…SSGY). Positions 2526-2542 (GRQGSGSGQSPGHGQRG) are enriched in gly residues. Low complexity-rich tracts occupy residues 2543–2566 (SGSR…SSGQ) and 2576–2594 (GFGH…SQHG). Over residues 2595 to 2605 (SGSGHSSGYGQ) the composition is skewed to gly residues. Over residues 2621–2642 (SSSGSSSHYGQHGSGSRQSSGH) the composition is skewed to low complexity. Residues Ser2652 and Ser2654 each carry the phosphoserine modification. Over residues 2663–2682 (GHSSSHGQHGSGSGRSSSRG) the composition is skewed to low complexity. A compositionally biased stretch (polar residues) spans 2698–2711 (ESGSGHSSAYSQHG). Composition is skewed to low complexity over residues 2719–2732 (SQGQ…QSST), 2741–2759 (GQSS…SSGY), and 2795–2816 (SSGY…CKGG).

The protein belongs to the S100-fused protein family. It in the N-terminal section; belongs to the S-100 family. Processed during the process of epidermal differentiation. In terms of processing, forms covalent cross-links mediated by transglutaminase TGM3, between glutamine and the epsilon-amino group of lysine residues (in vitro). In terms of tissue distribution, expressed in cornified epidermis, psoriatic and regenerating skin after wounding. Found in the upper granular layer and in the entire cornified layer of epidermis.

The protein localises to the cytoplasmic granule. Its function is as follows. Component of the epidermal cornified cell envelopes. The polypeptide is Hornerin (HRNR) (Homo sapiens (Human)).